The chain runs to 243 residues: UPF0246 protein MGAS9429_Spy1799 (243 aa).

It belongs to the UPF0246 family.

The polypeptide is UPF0246 protein MGAS9429_Spy1799 (Streptococcus pyogenes serotype M12 (strain MGAS9429)).